The sequence spans 226 residues: Gap junction beta-2 protein (226 aa).

An intramembrane segment occupies 2-13; that stretch reads DWGTLQTILGGV. Residues 14–20 are Cytoplasmic-facing; the sequence is NKHSTSI. Residues 21-40 traverse the membrane as a helical segment; that stretch reads GKIWLTVLFIFRIMILVVAA. The Extracellular segment spans residues 41-73; the sequence is KEVWGDEQADFVCNTLQPGCKNVCYDHYFPISH. Positions 42, 45, and 47 each coordinate Ca(2+). 3 disulfide bridges follow: C53/C180, C60/C174, and C64/C169. Residues 74–94 form a helical membrane-spanning segment; that stretch reads IRLWALQLIFVSTPALLVAMH. Topologically, residues 95–135 are cytoplasmic; the sequence is VAYRRHEKKRKFIKGEIKSEFKDIEEIKTQKVRIEGSLWWT. Residues 136–156 traverse the membrane as a helical segment; sequence YTSSIFFRVIFEAAFMYVFYV. Residues 157–189 are Extracellular-facing; the sequence is MYDGFSMQRLVKCNAWPCPNTVDCFVSRPTEKT. A helical membrane pass occupies residues 190–210; it reads VFTVFMIAVSGICILLNVTEL. Topologically, residues 211–226 are cytoplasmic; the sequence is CYLLIRYCSGKSKKPV.

This sequence belongs to the connexin family. Beta-type (group I) subfamily. As to quaternary structure, a hemichannel or connexon is composed of a hexamer of connexins. A functional gap junction is formed by the apposition of two hemichannels. Forms heteromeric channels with GJB4. Interacts with CNST.

The protein localises to the cell membrane. It is found in the cell junction. Its subcellular location is the gap junction. Functionally, structural component of gap junctions. Gap junctions are dodecameric channels that connect the cytoplasm of adjoining cells. They are formed by the docking of two hexameric hemichannels, one from each cell membrane. Small molecules and ions diffuse from one cell to a neighboring cell via the central pore. This Gorilla gorilla gorilla (Western lowland gorilla) protein is Gap junction beta-2 protein (GJB2).